The primary structure comprises 297 residues: Ribosomal RNA small subunit methyltransferase H (297 aa).

Residues 30 to 32 (GGY), Asp-48, Phe-75, Asp-96, and Gln-103 contribute to the S-adenosyl-L-methionine site.

It belongs to the methyltransferase superfamily. RsmH family.

It localises to the cytoplasm. It carries out the reaction cytidine(1402) in 16S rRNA + S-adenosyl-L-methionine = N(4)-methylcytidine(1402) in 16S rRNA + S-adenosyl-L-homocysteine + H(+). Specifically methylates the N4 position of cytidine in position 1402 (C1402) of 16S rRNA. The polypeptide is Ribosomal RNA small subunit methyltransferase H (Ehrlichia chaffeensis (strain ATCC CRL-10679 / Arkansas)).